Consider the following 134-residue polypeptide: Profilin-3 (134 aa).

Cysteine 13 and cysteine 118 are disulfide-bonded. The short motif at 84–100 (AVIRGKKGSGGITIKKT) is the Involved in PIP2 interaction element. Position 114 is a phosphothreonine (threonine 114).

It belongs to the profilin family. Occurs in many kinds of cells as a complex with monomeric actin in a 1:1 ratio. Phosphorylated by MAP kinases.

The protein resides in the cytoplasm. The protein localises to the cytoskeleton. Functionally, binds to actin and affects the structure of the cytoskeleton. At high concentrations, profilin prevents the polymerization of actin, whereas it enhances it at low concentrations. The polypeptide is Profilin-3 (Olea europaea (Common olive)).